The primary structure comprises 364 residues: DNA replication and repair protein RecF (364 aa).

30–37 provides a ligand contact to ATP; sequence GENGSGKT.

It belongs to the RecF family.

It is found in the cytoplasm. In terms of biological role, the RecF protein is involved in DNA metabolism; it is required for DNA replication and normal SOS inducibility. RecF binds preferentially to single-stranded, linear DNA. It also seems to bind ATP. This is DNA replication and repair protein RecF from Xylella fastidiosa (strain M12).